The primary structure comprises 253 residues: Protein C1orf43 (253 aa).

A helical membrane pass occupies residues 11-31; the sequence is VNVVLVMAYGSLVFVLLFIFV.

The protein resides in the membrane. It is found in the golgi apparatus. It localises to the mitochondrion. In terms of biological role, general regulator of phagocytosis. Required to uptake Gram negative bacterium by macrophages. This chain is Protein C1orf43 (C1orf43), found in Homo sapiens (Human).